A 789-amino-acid polypeptide reads, in one-letter code: Trimethylamine-oxide aldolase (789 aa).

It in the C-terminal section; belongs to the GcvT family.

It catalyses the reaction trimethylamine N-oxide + H(+) = dimethylamine + formaldehyde. Functionally, catalyzes the conversion of trimethylamine N-oxide (TMAO) to dimethylamine (DMA) and formaldehyde. The chain is Trimethylamine-oxide aldolase from Ruegeria pomeroyi (strain ATCC 700808 / DSM 15171 / DSS-3) (Silicibacter pomeroyi).